The primary structure comprises 439 residues: Lipoyl synthase, mitochondrial (439 aa).

A mitochondrion-targeting transit peptide spans 1–37 (MVASARGLRTLHSAHSSISALPASTVPRLQLAVSRCY). Residues cysteine 150, cysteine 155, cysteine 161, cysteine 181, cysteine 185, cysteine 188, and serine 396 each contribute to the [4Fe-4S] cluster site. In terms of domain architecture, Radical SAM core spans 164–385 (GSSKSAATAT…KERALEMGFL (222 aa)).

The protein belongs to the radical SAM superfamily. Lipoyl synthase family. The cofactor is [4Fe-4S] cluster.

It is found in the mitochondrion. The catalysed reaction is [[Fe-S] cluster scaffold protein carrying a second [4Fe-4S](2+) cluster] + N(6)-octanoyl-L-lysyl-[protein] + 2 oxidized [2Fe-2S]-[ferredoxin] + 2 S-adenosyl-L-methionine + 4 H(+) = [[Fe-S] cluster scaffold protein] + N(6)-[(R)-dihydrolipoyl]-L-lysyl-[protein] + 4 Fe(3+) + 2 hydrogen sulfide + 2 5'-deoxyadenosine + 2 L-methionine + 2 reduced [2Fe-2S]-[ferredoxin]. It functions in the pathway protein modification; protein lipoylation via endogenous pathway; protein N(6)-(lipoyl)lysine from octanoyl-[acyl-carrier-protein]: step 2/2. Its function is as follows. Catalyzes the radical-mediated insertion of two sulfur atoms into the C-6 and C-8 positions of the octanoyl moiety bound to the lipoyl domains of lipoate-dependent enzymes, thereby converting the octanoylated domains into lipoylated derivatives. This chain is Lipoyl synthase, mitochondrial, found in Paracoccidioides lutzii (strain ATCC MYA-826 / Pb01) (Paracoccidioides brasiliensis).